Reading from the N-terminus, the 82-residue chain is Endocuticle structural protein SgAbd-6 (82 aa).

Glutamine 1 is subject to Pyrrolidone carboxylic acid. In terms of domain architecture, Chitin-binding type R&amp;R spans 18 to 82 (LGQYTFGFKT…ENGFQPQYTQ (65 aa)).

Its function is as follows. Component of the abdominal endocuticle. The sequence is that of Endocuticle structural protein SgAbd-6 from Schistocerca gregaria (Desert locust).